Consider the following 199-residue polypeptide: uncharacterized protein (199 aa).

One can recognise a G-patch domain in the interval 112 to 160; sequence PKSLGYRVLSQYGWSPQGDTAGLGLENQGRRAPVRAFRVKNDTIGLGTK.

This is an uncharacterized protein from Schizosaccharomyces pombe (strain 972 / ATCC 24843) (Fission yeast).